Here is a 201-residue protein sequence, read N- to C-terminus: Molybdenum cofactor guanylyltransferase (201 aa).

GTP is bound by residues 15 to 17, Lys28, Asp74, and Asp104; that span reads LCG. Mg(2+) is bound at residue Asp104.

Belongs to the MobA family. Monomer. It depends on Mg(2+) as a cofactor.

Its subcellular location is the cytoplasm. It catalyses the reaction Mo-molybdopterin + GTP + H(+) = Mo-molybdopterin guanine dinucleotide + diphosphate. In terms of biological role, transfers a GMP moiety from GTP to Mo-molybdopterin (Mo-MPT) cofactor (Moco or molybdenum cofactor) to form Mo-molybdopterin guanine dinucleotide (Mo-MGD) cofactor. The protein is Molybdenum cofactor guanylyltransferase of Ectopseudomonas mendocina (strain ymp) (Pseudomonas mendocina).